Reading from the N-terminus, the 81-residue chain is Cytochrome b559 subunit alpha (81 aa).

Residues 21 to 35 form a helical membrane-spanning segment; the sequence is VIHSITIPMLFIAGW. Residue His23 participates in heme binding.

It belongs to the PsbE/PsbF family. In terms of assembly, heterodimer of an alpha subunit and a beta subunit. PSII is composed of 1 copy each of membrane proteins PsbA, PsbB, PsbC, PsbD, PsbE, PsbF, PsbH, PsbI, PsbJ, PsbK, PsbL, PsbM, PsbT, PsbX, PsbY, PsbZ, Psb30/Ycf12, peripheral proteins PsbO, CyanoQ (PsbQ), PsbU, PsbV and a large number of cofactors. It forms dimeric complexes. Requires heme b as cofactor.

It is found in the cellular thylakoid membrane. This b-type cytochrome is tightly associated with the reaction center of photosystem II (PSII). PSII is a light-driven water:plastoquinone oxidoreductase that uses light energy to abstract electrons from H(2)O, generating O(2) and a proton gradient subsequently used for ATP formation. It consists of a core antenna complex that captures photons, and an electron transfer chain that converts photonic excitation into a charge separation. This is Cytochrome b559 subunit alpha from Picosynechococcus sp. (strain ATCC 27264 / PCC 7002 / PR-6) (Agmenellum quadruplicatum).